The following is a 297-amino-acid chain: 33 kDa chaperonin (297 aa).

2 disulfides stabilise this stretch: Cys239–Cys241 and Cys272–Cys275.

Belongs to the HSP33 family. In terms of processing, under oxidizing conditions two disulfide bonds are formed involving the reactive cysteines. Under reducing conditions zinc is bound to the reactive cysteines and the protein is inactive.

The protein localises to the cytoplasm. Redox regulated molecular chaperone. Protects both thermally unfolding and oxidatively damaged proteins from irreversible aggregation. Plays an important role in the bacterial defense system toward oxidative stress. This Synechococcus elongatus (strain ATCC 33912 / PCC 7942 / FACHB-805) (Anacystis nidulans R2) protein is 33 kDa chaperonin.